The sequence spans 1435 residues: Protein SPP41 (1435 aa).

Disordered stretches follow at residues 16-74 (VGNL…NIEI), 88-265 (VANA…ENTL), 286-309 (AKQT…VEAQ), 322-424 (ELLS…DDEF), 442-482 (ETST…DSLD), 519-708 (SVSD…MKVP), and 934-972 (QQLD…AGHT). The span at 27 to 42 (GQEEGEVQGGEQEGDD) shows a compositional bias: acidic residues. Basic and acidic residues-rich tracts occupy residues 53–63 (IEPKHPDDSQH), 98–127 (EQAK…KEQQ), and 139–154 (LKSD…ERRV). The UIM domain maps to 171 to 190 (QDDENLRMAILESLQELNTN). A compositionally biased stretch (basic and acidic residues) spans 196 to 205 (EPEKHEHAAP). Residues 211-223 (SKKSSKKKKKDKS) show a composition bias toward basic residues. The span at 224–234 (KNRESSKDKSS) shows a compositional bias: basic and acidic residues. Positions 235 to 249 (KKSKSSSHSKKHAKD) are enriched in basic residues. Residues 286 to 301 (AKQTVDIQDNSHTDNT) show a composition bias toward polar residues. The segment covering 345–355 (KAVEPPRKPTA) has biased composition (basic and acidic residues). Basic residues predominate over residues 367-383 (KPKKRPPQEKKKTKSKT). Residues 384-398 (SKAASTANKSPASES) show a composition bias toward low complexity. Composition is skewed to polar residues over residues 442–451 (ETSTHTATQD) and 459–482 (DFTS…DSLD). Composition is skewed to basic and acidic residues over residues 524 to 548 (LPHD…EKKT), 610 to 628 (KNKE…AREE), and 637 to 652 (KQRL…KIVE). Residues 665–674 (KSGKPKKPYR) are compositionally biased toward basic residues. Basic and acidic residues predominate over residues 676–691 (WTPEELLKRSQEAEKP). The short motif at 683–699 (KRSQEAEKPRKVKKERK) is the Nuclear localization signal element. Basic residues predominate over residues 692-706 (RKVKKERKKKEKKMK). Lys981 is covalently cross-linked (Glycyl lysine isopeptide (Lys-Gly) (interchain with G-Cter in SUMO)). Basic and acidic residues predominate over residues 1005-1014 (KLELTKRAES). The tract at residues 1005–1125 (KLELTKRAES…DSVNTTTGKP (121 aa)) is disordered. Ser1014 bears the Phosphoserine mark. Polar residues predominate over residues 1021–1032 (NVETAKETQSVQ). Basic and acidic residues-rich tracts occupy residues 1033–1082 (EIKE…EKIA) and 1091–1103 (LSDK…KSTL). At Ser1067 the chain carries Phosphoserine. Positions 1108–1123 (AQLTGNEPDSVNTTTG) are enriched in polar residues. Lys1154 participates in a covalent cross-link: Glycyl lysine isopeptide (Lys-Gly) (interchain with G-Cter in SUMO).

Interacts with PRP8 and RAP1.

Its subcellular location is the nucleus. Its function is as follows. Negative regulator of PRP3 and PRP4 genes. This is Protein SPP41 (SPP41) from Saccharomyces cerevisiae (strain ATCC 204508 / S288c) (Baker's yeast).